The primary structure comprises 234 residues: UPF0502 protein BPSS1373 (234 aa).

It belongs to the UPF0502 family.

This Burkholderia pseudomallei (strain K96243) protein is UPF0502 protein BPSS1373.